Reading from the N-terminus, the 309-residue chain is 1,4-dihydroxy-2-naphthoyl-CoA synthase (309 aa).

Residues R53, 98–102, Y110, 152–156, T179, S185, Y282, and K297 each bind substrate; these read SGGDQ and WAAGG.

Belongs to the enoyl-CoA hydratase/isomerase family. MenB subfamily.

The enzyme catalyses 2-succinylbenzoyl-CoA + H(+) = 1,4-dihydroxy-2-naphthoyl-CoA + H2O. The protein operates within quinol/quinone metabolism; 1,4-dihydroxy-2-naphthoate biosynthesis; 1,4-dihydroxy-2-naphthoate from chorismate: step 6/7. It functions in the pathway quinol/quinone metabolism; menaquinone biosynthesis. Functionally, converts o-succinylbenzoyl-CoA (OSB-CoA) to 1,4-dihydroxy-2-naphthoyl-CoA (DHNA-CoA). The polypeptide is 1,4-dihydroxy-2-naphthoyl-CoA synthase (Mycolicibacterium smegmatis (strain ATCC 700084 / mc(2)155) (Mycobacterium smegmatis)).